We begin with the raw amino-acid sequence, 490 residues long: Aspartyl/glutamyl-tRNA(Asn/Gln) amidotransferase subunit B (490 aa).

Belongs to the GatB/GatE family. GatB subfamily. Heterotrimer of A, B and C subunits.

The enzyme catalyses L-glutamyl-tRNA(Gln) + L-glutamine + ATP + H2O = L-glutaminyl-tRNA(Gln) + L-glutamate + ADP + phosphate + H(+). It catalyses the reaction L-aspartyl-tRNA(Asn) + L-glutamine + ATP + H2O = L-asparaginyl-tRNA(Asn) + L-glutamate + ADP + phosphate + 2 H(+). Allows the formation of correctly charged Asn-tRNA(Asn) or Gln-tRNA(Gln) through the transamidation of misacylated Asp-tRNA(Asn) or Glu-tRNA(Gln) in organisms which lack either or both of asparaginyl-tRNA or glutaminyl-tRNA synthetases. The reaction takes place in the presence of glutamine and ATP through an activated phospho-Asp-tRNA(Asn) or phospho-Glu-tRNA(Gln). This Prochlorococcus marinus subsp. pastoris (strain CCMP1986 / NIES-2087 / MED4) protein is Aspartyl/glutamyl-tRNA(Asn/Gln) amidotransferase subunit B.